Consider the following 379-residue polypeptide: MGEALNVMESVRSIVFKESENLEGSATKIEGYDFNKGVNYAELFKSMASTGFQAANLGDAIQIVNQMLDWRLSHEQPMEDCSEEERDVAYRESVTCKIFLGFTSNLVSSGVRDTIRYLVQHRMVDVVVTTAGGIEEDLIKCLAPTYKGDFSLPGAVLRSKGLNRIGNLLVPNDNYCKFENWIIPIFDQMYEEQIKEKVLWTPSKVIARLAKEINDETSYLYWAYKNRIPVFCPGLTDGSLGDMLYFHSFKKGDPDNPDLNPGLIIDIVGDIRAMNSEAVHAGSRKTGMIILGGGLPKHHVCNANMMRNGADFAVYINTAQEFDGSDSGARPDEAVSWGKIRGGAKTVKVHCDATIAFPILVAETFAAKRKELSHIRCQV.

NAD(+) is bound by residues 104–108 (SNLVS), 130–132 (TAG), E136, and D237. Residue 135-136 (EE) coordinates spermidine. D242 serves as a coordination point for spermidine. G293 contacts NAD(+). Position 298 (H298) interacts with spermidine. 318-319 (TA) contacts NAD(+). Residues 324-326 (GSD) and 333-339 (EAVSWGK) contribute to the spermidine site. The active-site Nucleophile is K339. 352-353 (DA) provides a ligand contact to NAD(+).

The protein belongs to the deoxyhypusine synthase family. As to quaternary structure, homotetramer. The cofactor is NAD(+).

The catalysed reaction is [eIF5A protein]-L-lysine + spermidine = [eIF5A protein]-deoxyhypusine + propane-1,3-diamine. Its pathway is protein modification; eIF5A hypusination. Catalyzes the NAD-dependent oxidative cleavage of spermidine and the subsequent transfer of the butylamine moiety of spermidine to the epsilon-amino group of a specific lysine residue of the eIF-5A precursor protein to form the intermediate deoxyhypusine residue. Also able to produce homospermidine from putrescine. This chain is Deoxyhypusine synthase (DHS1), found in Nicotiana tabacum (Common tobacco).